A 201-amino-acid chain; its full sequence is Peroxiredoxin-2F, mitochondrial (201 aa).

The transit peptide at 1–30 (MAMSILKLRNLSALRSAANSARIGVSSRGF) directs the protein to the mitochondrion. A Phosphothreonine modification is found at T37. One can recognise a Thioredoxin domain in the interval 37-201 (TDITSAAPGV…TGAEVILGQI (165 aa)). The active-site Cysteine sulfenic acid (-SOH) intermediate is the C89. S149 is subject to Phosphoserine.

The protein belongs to the peroxiredoxin family. Prx5 subfamily. In terms of assembly, monomer. As to expression, expressed in the whole plant.

The protein localises to the mitochondrion matrix. It catalyses the reaction [glutaredoxin]-dithiol + a hydroperoxide = [glutaredoxin]-disulfide + an alcohol + H2O. Its function is as follows. Thiol-specific peroxidase that catalyzes the reduction of hydrogen peroxide and organic hydroperoxides to water and alcohols, respectively. Plays a role in cell protection against oxidative stress by detoxifying peroxides. Reduces preferentially hydrogen peroxide rather than alkyl peroxides. May be involved in mitochondrial redox homeostasis. This chain is Peroxiredoxin-2F, mitochondrial (PRXIIF), found in Arabidopsis thaliana (Mouse-ear cress).